A 534-amino-acid polypeptide reads, in one-letter code: Beta-1,2-xylosyltransferase (534 aa).

Topologically, residues 1–11 (MSKRNPKILKI) are cytoplasmic. A helical; Signal-anchor for type II membrane protein transmembrane segment spans residues 12–34 (FLYMLLLNSLFLIIYFVFHSSSF). Residues 35 to 534 (SPEQSQPPHI…LTEIMKSLGC (500 aa)) lie on the Lumenal side of the membrane. Residues Asn-51, Asn-301, and Asn-479 are each glycosylated (N-linked (GlcNAc...) asparagine).

Post-translationally, glycosylation at least at one of the two sites Asn-51 and Asn-301 is necessary for enzyme stability and activity.

The protein localises to the golgi apparatus membrane. The enzyme catalyses N(4)-{beta-D-GlcNAc-(1-&gt;2)-alpha-D-Man-(1-&gt;3)-[beta-D-GlcNAc-(1-&gt;2)-alpha-D-Man-(1-&gt;6)]-beta-D-Man-(1-&gt;4)-beta-D-GlcNAc-(1-&gt;4)-beta-D-GlcNAc}-L-asparaginyl-[protein] + UDP-alpha-D-xylose = N(4)-{beta-D-GlcNAc-(1-&gt;2)-alpha-D-Man-(1-&gt;3)-[beta-D-GlcNAc-(1-&gt;2)-alpha-D-Man-(1-&gt;6)]-[beta-D-Xyl-(1-&gt;2)]-beta-D-Man-(1-&gt;4)-beta-D-GlcNAc-(1-&gt;4)-beta-D-GlcNAc}-L-asparaginyl-[protein] + UDP + H(+). Its pathway is protein modification; protein glycosylation. In terms of biological role, glycosyltransferase involved in the xylosylation of N-glycans. Possesses beta-1,2-xylosyltransferase activity, transferring xylose from UDP-xylose to the core beta-linked mannose of N-glycans. Involved in the biosynthesis of glycoprotein bound N-glycans. Does not require metal ions for its activity. This is Beta-1,2-xylosyltransferase from Arabidopsis thaliana (Mouse-ear cress).